Reading from the N-terminus, the 234-residue chain is NLP effector protein Pc576423 (234 aa).

The first 18 residues, 1-18 (MNLRAIAVTFATFAGANA), serve as a signal peptide directing secretion. N-linked (GlcNAc...) asparagine glycans are attached at residues N35 and N66. The Hepta-peptide GHRHDWE motif motif lies at 119-125 (GHRHDWE).

Belongs to the Necrosis inducing protein (NPP1) family.

Its subcellular location is the secreted. Functionally, secreted effector that contributes strongly to virulence during infection by P.capsici. This is NLP effector protein Pc576423 from Phytophthora capsici.